The primary structure comprises 376 residues: Enoyl-[acyl-carrier-protein] reductase, mitochondrial (376 aa).

Residues 1–12 (MLRTLRTSQLAR) constitute a mitochondrion transit peptide. Tyr79 acts as the Proton donor in catalysis. NADP(+) is bound by residues Asn160, 183-186 (NSGV), 206-208 (RDR), 277-280 (YGGM), 302-304 (YWL), and Lys368.

It belongs to the zinc-containing alcohol dehydrogenase family. Quinone oxidoreductase subfamily. As to quaternary structure, homodimer.

Its subcellular location is the mitochondrion matrix. The enzyme catalyses a 2,3-saturated acyl-[ACP] + NADP(+) = a (2E)-enoyl-[ACP] + NADPH + H(+). Catalyzes the NADPH-dependent reduction of trans-2-enoyl thioesters in mitochondrial fatty acid synthesis (fatty acid synthesis type II). Fatty acid chain elongation in mitochondria uses acyl carrier protein (ACP) as an acyl group carrier, but the enzyme accepts both ACP and CoA thioesters as substrates in vitro. Required for respiration and the maintenance of the mitochondrial compartment. This chain is Enoyl-[acyl-carrier-protein] reductase, mitochondrial (ETR1), found in Yarrowia lipolytica (strain CLIB 122 / E 150) (Yeast).